The following is an 835-amino-acid chain: Ribonucleoside-diphosphate reductase large subunit (835 aa).

Substrate contacts are provided by residues Ser222, 237–238, Gly266, 447–451, and 660–664; these read SC, NLCCE, and PSASS. The cysteines at positions 238 and 464 are disulfide-linked. The active-site Proton acceptor is Asn447. Cys449 serves as the catalytic Cysteine radical intermediate. The active-site Proton acceptor is the Glu451.

It belongs to the ribonucleoside diphosphate reductase large chain family. As to quaternary structure, heterotetramer composed of a homodimer of the large subunit (R1) and a homodimer of the small subunit (R2). Larger multisubunit protein complex are also active, composed of (R1)n(R2)n.

It catalyses the reaction a 2'-deoxyribonucleoside 5'-diphosphate + [thioredoxin]-disulfide + H2O = a ribonucleoside 5'-diphosphate + [thioredoxin]-dithiol. Ribonucleoside-diphosphate reductase holoenzyme provides the precursors necessary for viral DNA synthesis. Allows virus growth in non-dividing cells. Catalyzes the biosynthesis of deoxyribonucleotides from the corresponding ribonucleotides. The polypeptide is Ribonucleoside-diphosphate reductase large subunit (Magallana gigas (Pacific oyster)).